The sequence spans 214 residues: Large ribosomal subunit protein uL3 (214 aa).

Belongs to the universal ribosomal protein uL3 family. Part of the 50S ribosomal subunit. Forms a cluster with proteins L14 and L19.

In terms of biological role, one of the primary rRNA binding proteins, it binds directly near the 3'-end of the 23S rRNA, where it nucleates assembly of the 50S subunit. The sequence is that of Large ribosomal subunit protein uL3 from Streptomyces coelicolor (strain ATCC BAA-471 / A3(2) / M145).